The primary structure comprises 64 residues: Large ribosomal subunit protein uL29 (64 aa).

This sequence belongs to the universal ribosomal protein uL29 family.

This chain is Large ribosomal subunit protein uL29, found in Legionella pneumophila (strain Lens).